The primary structure comprises 310 residues: tRNA pseudouridine synthase B (310 aa).

Aspartate 38 (nucleophile) is an active-site residue.

The protein belongs to the pseudouridine synthase TruB family. Type 1 subfamily.

It catalyses the reaction uridine(55) in tRNA = pseudouridine(55) in tRNA. Responsible for synthesis of pseudouridine from uracil-55 in the psi GC loop of transfer RNAs. This is tRNA pseudouridine synthase B from Geotalea uraniireducens (strain Rf4) (Geobacter uraniireducens).